We begin with the raw amino-acid sequence, 360 residues long: UDP-3-O-acylglucosamine N-acyltransferase (360 aa).

The Proton acceptor role is filled by histidine 256. Residues 341–360 (EGSGAETAARPDDDRDEGRG) form a disordered region. Residues 349-360 (ARPDDDRDEGRG) show a composition bias toward basic and acidic residues.

This sequence belongs to the transferase hexapeptide repeat family. LpxD subfamily. In terms of assembly, homotrimer.

The catalysed reaction is a UDP-3-O-[(3R)-3-hydroxyacyl]-alpha-D-glucosamine + a (3R)-hydroxyacyl-[ACP] = a UDP-2-N,3-O-bis[(3R)-3-hydroxyacyl]-alpha-D-glucosamine + holo-[ACP] + H(+). Its pathway is bacterial outer membrane biogenesis; LPS lipid A biosynthesis. Its function is as follows. Catalyzes the N-acylation of UDP-3-O-acylglucosamine using 3-hydroxyacyl-ACP as the acyl donor. Is involved in the biosynthesis of lipid A, a phosphorylated glycolipid that anchors the lipopolysaccharide to the outer membrane of the cell. The polypeptide is UDP-3-O-acylglucosamine N-acyltransferase (Rhodopseudomonas palustris (strain TIE-1)).